The primary structure comprises 327 residues: Zinc transport protein ZntB (327 aa).

Over 1 to 273 (MEAIKGADVN…ARRTYTMSLM (273 aa)) the chain is Cytoplasmic. Residues 274–294 (AMVFLPSTFLTGLFGVNLGGI) form a helical membrane-spanning segment. The Periplasmic portion of the chain corresponds to 295–300 (PGGGWR). A helical transmembrane segment spans residues 301 to 321 (FGFSLFCILLVVLIGGVALWL). The Cytoplasmic portion of the chain corresponds to 322 to 327 (HRSKWL).

It belongs to the CorA metal ion transporter (MIT) (TC 1.A.35) family.

The protein localises to the cell inner membrane. The catalysed reaction is Zn(2+)(out) + H(+)(out) = Zn(2+)(in) + H(+)(in). In terms of biological role, zinc transporter. Acts as a Zn(2+):proton symporter, which likely mediates zinc ion uptake. This chain is Zinc transport protein ZntB, found in Escherichia fergusonii (strain ATCC 35469 / DSM 13698 / CCUG 18766 / IAM 14443 / JCM 21226 / LMG 7866 / NBRC 102419 / NCTC 12128 / CDC 0568-73).